We begin with the raw amino-acid sequence, 751 residues long: Semaphorin-3C (751 aa).

Residues 1–20 (MAFRTICVLVGVFICSICVK) form the signal peptide. Residues 28–511 (RVYLTFDELR…SNEGVSQVSL (484 aa)) form the Sema domain. N81 carries an N-linked (GlcNAc...) asparagine glycan. The cysteines at positions 101 and 112 are disulfide-linked. N-linked (GlcNAc...) asparagine glycosylation is present at N123. C130 and C139 are disulfide-bonded. N-linked (GlcNAc...) asparagine glycans are attached at residues N252 and N268. 2 disulfide bridges follow: C266/C378 and C290/C338. An N-linked (GlcNAc...) asparagine glycan is attached at N465. C514 and C532 form a disulfide bridge. Residues 571-655 (AYRNAAEIVQ…TENSFKQTIA (85 aa)) form the Ig-like C2-type domain. N585 and N586 each carry an N-linked (GlcNAc...) asparagine glycan. C643 and C709 are disulfide-bonded. Residues 712-731 (TRQQHQQGDESQKMRGDYGK) show a composition bias toward basic and acidic residues. Residues 712 to 751 (TRQQHQQGDESQKMRGDYGKLKALINSRKSRNRRNQLPES) are disordered.

Belongs to the semaphorin family. As to quaternary structure, interacts with PLXND1. Expressed intensely in the heart, skeletal muscle, colon, small intestine, ovary, testis, and prostate. Faint expression ubiquitously among other organs, including brain.

It is found in the secreted. Functionally, binds to plexin family members and plays an important role in the regulation of developmental processes. Required for normal cardiovascular development during embryogenesis. Functions as attractant for growing axons, and thereby plays an important role in axon growth and axon guidance. The polypeptide is Semaphorin-3C (SEMA3C) (Homo sapiens (Human)).